The following is a 37-amino-acid chain: U10-ctenitoxin-Co1a (37 aa).

Disulfide bonds link cysteine 2-cysteine 17, cysteine 9-cysteine 22, cysteine 16-cysteine 33, and cysteine 24-cysteine 31.

As to expression, expressed by the venom gland.

The protein resides in the secreted. Functionally, antagonist of L-type calcium channels (Cav1/CACNA1). The chain is U10-ctenitoxin-Co1a from Ctenus ornatus (Brazilian spider).